Reading from the N-terminus, the 203-residue chain is Non-specific lipid transfer protein GPI-anchored 20 (203 aa).

Positions 1–21 are cleaved as a signal peptide; it reads MSKIISLVVAMIAVLALPIRG. Disulfide bonds link Cys29/Cys74, Cys40/Cys58, Cys59/Cys99, and Cys72/Cys108. 3 N-linked (GlcNAc...) asparagine glycosylation sites follow: Asn46, Asn50, and Asn88. The segment at 119–182 is disordered; sequence GPAATFGPSM…TSRPSETPSS (64 aa). Polar residues-rich tracts occupy residues 144–156 and 169–179; these read AAQT…TRPF and DGGSTSRPSET. Ser172 is lipidated: GPI-anchor amidated serine. Positions 173-203 are cleaved as a propeptide — removed in mature form; that stretch reads TSRPSETPSSAYALSPSLLFFSIALVALKFY.

The protein belongs to the plant LTP family. In terms of tissue distribution, expressed in seedlings, preferentially in hypocotyls and roots. Also observed in siliques and sepals.

It is found in the cell membrane. Probable lipid transfer protein. The sequence is that of Non-specific lipid transfer protein GPI-anchored 20 from Arabidopsis thaliana (Mouse-ear cress).